A 330-amino-acid chain; its full sequence is 2-phospho-L-lactate transferase (330 aa).

D49 lines the 7,8-didemethyl-8-hydroxy-5-deazariboflavin pocket.

The protein belongs to the CofD family. Homodimer. It depends on Mg(2+) as a cofactor.

It carries out the reaction (2S)-lactyl-2-diphospho-5'-guanosine + 7,8-didemethyl-8-hydroxy-5-deazariboflavin = oxidized coenzyme F420-0 + GMP + H(+). It functions in the pathway cofactor biosynthesis; coenzyme F420 biosynthesis. Its function is as follows. Catalyzes the transfer of the 2-phospholactate moiety from (2S)-lactyl-2-diphospho-5'-guanosine to 7,8-didemethyl-8-hydroxy-5-deazariboflavin (FO) with the formation of oxidized coenzyme F420-0 and GMP. This is 2-phospho-L-lactate transferase from Haloarcula marismortui (strain ATCC 43049 / DSM 3752 / JCM 8966 / VKM B-1809) (Halobacterium marismortui).